The following is an 894-amino-acid chain: DNA mismatch repair protein MutS (894 aa).

632–639 (GPNMGGKS) is a binding site for ATP.

Belongs to the DNA mismatch repair MutS family.

Its function is as follows. This protein is involved in the repair of mismatches in DNA. It is possible that it carries out the mismatch recognition step. This protein has a weak ATPase activity. The polypeptide is DNA mismatch repair protein MutS (Paraburkholderia phytofirmans (strain DSM 17436 / LMG 22146 / PsJN) (Burkholderia phytofirmans)).